We begin with the raw amino-acid sequence, 103 residues long: Small ribosomal subunit protein uS10 (103 aa).

This sequence belongs to the universal ribosomal protein uS10 family. Part of the 30S ribosomal subunit.

In terms of biological role, involved in the binding of tRNA to the ribosomes. The protein is Small ribosomal subunit protein uS10 of Leptothrix cholodnii (strain ATCC 51168 / LMG 8142 / SP-6) (Leptothrix discophora (strain SP-6)).